The chain runs to 621 residues: MVPVENTEGPNLLNQKGTAVETEGSYRASGSRHPPWARGCGMFTFLSSVTAAVSGLLVGYELGIISGALLQIKTLLTLSCHEQEMVVSSLLIGALLASLTGGVLIDRYGRRTAIILSSCLLGLGSLVLILSLSYTVLIVGRIAIGVSISLSSIATCVYIAEIAPQHRRGLLVSLNELMIVIGILSAYISNYAFANVFHGWKYMFGLVIPLGILQAIAMYFLPPSPRFLVMKGQEGAASKVLGRLRALSDATEELTVIKSSLKDEYQYSFWDLFRSKDNMRTRIMIGLTLVFFVQITGQPNILFYASTVLKSVGFQSNEAASLASTGVGVVKVISTIPATLLVDHVGSKTFLCIGSSVMAASLVTMGIVNLNIHMNFTNICRSHNSINQSLDESVIYGPGNLSASNNTLRDHFKGIASHSRSSLMPLRNDVDKRGETTSASLLNAVLSHTEYQIVTDPGDVPAFLKWLSLASLLVYVAAFSIGLGPMPWLVLSEIFPGGIRGRAMALTSSMNWGINLLISLTFLTVTDLIGLPWVCFIYTIMSLASLLFVVMFIPETKGCSLEQISMELAKVNYVKNNICFMSHHQEELVPRQPQKRKPQEQLLECNKLCGRGQSRQLSPEN.

The Cytoplasmic segment spans residues 1 to 48 (MVPVENTEGPNLLNQKGTAVETEGSYRASGSRHPPWARGCGMFTFLSS). A helical membrane pass occupies residues 49 to 69 (VTAAVSGLLVGYELGIISGAL). Over 70-84 (LQIKTLLTLSCHEQE) the chain is Extracellular. A helical transmembrane segment spans residues 85-105 (MVVSSLLIGALLASLTGGVLI). At 106 to 119 (DRYGRRTAIILSSC) the chain is on the cytoplasmic side. A helical transmembrane segment spans residues 120–140 (LLGLGSLVLILSLSYTVLIVG). Residue Arg-141 is a topological domain, extracellular. Residues 142 to 162 (IAIGVSISLSSIATCVYIAEI) traverse the membrane as a helical segment. Over 163 to 176 (APQHRRGLLVSLNE) the chain is Cytoplasmic. The chain crosses the membrane as a helical span at residues 177-197 (LMIVIGILSAYISNYAFANVF). Topologically, residues 198–201 (HGWK) are extracellular. Residues 202 to 222 (YMFGLVIPLGILQAIAMYFLP) traverse the membrane as a helical segment. Residues 223 to 282 (PSPRFLVMKGQEGAASKVLGRLRALSDATEELTVIKSSLKDEYQYSFWDLFRSKDNMRTR) are Cytoplasmic-facing. A helical membrane pass occupies residues 283-303 (IMIGLTLVFFVQITGQPNILF). Over 304–321 (YASTVLKSVGFQSNEAAS) the chain is Extracellular. The helical transmembrane segment at 322–342 (LASTGVGVVKVISTIPATLLV) threads the bilayer. The Cytoplasmic portion of the chain corresponds to 343 to 349 (DHVGSKT). Residues 350–370 (FLCIGSSVMAASLVTMGIVNL) form a helical membrane-spanning segment. Residues 371–470 (NIHMNFTNIC…PAFLKWLSLA (100 aa)) are Extracellular-facing. Asn-375, Asn-387, Asn-400, and Asn-405 each carry an N-linked (GlcNAc...) asparagine glycan. The chain crosses the membrane as a helical span at residues 471–491 (SLLVYVAAFSIGLGPMPWLVL). At 492–502 (SEIFPGGIRGR) the chain is on the cytoplasmic side. A helical transmembrane segment spans residues 503-523 (AMALTSSMNWGINLLISLTFL). The Extracellular portion of the chain corresponds to 524 to 532 (TVTDLIGLP). The helical transmembrane segment at 533 to 553 (WVCFIYTIMSLASLLFVVMFI) threads the bilayer. Residues 554 to 621 (PETKGCSLEQ…GQSRQLSPEN (68 aa)) lie on the Cytoplasmic side of the membrane.

Belongs to the major facilitator superfamily. Sugar transporter (TC 2.A.1.1) family. Glucose transporter subfamily.

The protein resides in the cell membrane. The protein localises to the endomembrane system. Its subcellular location is the cytoplasm. It localises to the perinuclear region. The enzyme catalyses D-glucose(out) = D-glucose(in). Its function is as follows. Insulin-independent facilitative glucose transporter. The protein is Solute carrier family 2, facilitated glucose transporter member 12 of Macaca fascicularis (Crab-eating macaque).